The primary structure comprises 67 residues: MARITVEDCLEQIPNRFQLVLAATYRARMLSQGHAPKIESRNKPAVTALREIAAGKVGLEMLKKVPG.

The protein belongs to the RNA polymerase subunit omega family. The RNAP catalytic core consists of 2 alpha, 1 beta, 1 beta' and 1 omega subunit. When a sigma factor is associated with the core the holoenzyme is formed, which can initiate transcription.

It catalyses the reaction RNA(n) + a ribonucleoside 5'-triphosphate = RNA(n+1) + diphosphate. Promotes RNA polymerase assembly. Latches the N- and C-terminal regions of the beta' subunit thereby facilitating its interaction with the beta and alpha subunits. In Acidovorax ebreus (strain TPSY) (Diaphorobacter sp. (strain TPSY)), this protein is DNA-directed RNA polymerase subunit omega.